Consider the following 373-residue polypeptide: Protein-glutamate methylesterase/protein-glutamine glutaminase 2 (373 aa).

Residues 4–121 (KVLVVDDSGF…SRNPEKVKQL (118 aa)) enclose the Response regulatory domain. Asp-55 bears the 4-aspartylphosphate mark. Residues 136 to 181 (FSSYSAPAPQPASAPAPAPSSFASSRSPAPAPAPARAAAPAASANS) are disordered. Positions 143–153 (APQPASAPAPA) are enriched in pro residues. The segment covering 154–181 (PSSFASSRSPAPAPAPARAAAPAASANS) has biased composition (low complexity). One can recognise a CheB-type methylesterase domain in the interval 182 to 370 (PAPKRKAYKL…LDDIGRHLVE (189 aa)). Residues Ser-197, His-224, and Asp-317 contribute to the active site.

Belongs to the CheB family. Phosphorylated by CheA. Phosphorylation of the N-terminal regulatory domain activates the methylesterase activity.

Its subcellular location is the cytoplasm. The enzyme catalyses [protein]-L-glutamate 5-O-methyl ester + H2O = L-glutamyl-[protein] + methanol + H(+). It catalyses the reaction L-glutaminyl-[protein] + H2O = L-glutamyl-[protein] + NH4(+). Functionally, involved in chemotaxis. Part of a chemotaxis signal transduction system that modulates chemotaxis in response to various stimuli. Catalyzes the demethylation of specific methylglutamate residues introduced into the chemoreceptors (methyl-accepting chemotaxis proteins or MCP) by CheR. Also mediates the irreversible deamidation of specific glutamine residues to glutamic acid. This chain is Protein-glutamate methylesterase/protein-glutamine glutaminase 2, found in Pseudomonas fluorescens (strain ATCC BAA-477 / NRRL B-23932 / Pf-5).